Reading from the N-terminus, the 267-residue chain is Small ribosomal subunit protein uS3 (267 aa).

One can recognise a KH type-2 domain in the interval 38–106 (IRKLLATGME…QVQLNILEVK (69 aa)). The tract at residues 215–267 (TAASAPAGDRDRPRRERPSRPRRSGSTGTTATSTEAGRAATAVVEAPAENQEG) is disordered. Residues 222–233 (GDRDRPRRERPS) are compositionally biased toward basic and acidic residues. A compositionally biased stretch (low complexity) spans 238 to 256 (SGSTGTTATSTEAGRAATA).

This sequence belongs to the universal ribosomal protein uS3 family. As to quaternary structure, part of the 30S ribosomal subunit. Forms a tight complex with proteins S10 and S14.

In terms of biological role, binds the lower part of the 30S subunit head. Binds mRNA in the 70S ribosome, positioning it for translation. In Nocardia farcinica (strain IFM 10152), this protein is Small ribosomal subunit protein uS3.